Here is a 388-residue protein sequence, read N- to C-terminus: DNA primase small subunit PriS (388 aa).

Active-site residues include aspartate 100, aspartate 102, and aspartate 288.

This sequence belongs to the eukaryotic-type primase small subunit family. As to quaternary structure, heterodimer of a small subunit (PriS) and a large subunit (PriL). Requires Mg(2+) as cofactor. It depends on Mn(2+) as a cofactor.

Catalytic subunit of DNA primase, an RNA polymerase that catalyzes the synthesis of short RNA molecules used as primers for DNA polymerase during DNA replication. The small subunit contains the primase catalytic core and has DNA synthesis activity on its own. Binding to the large subunit stabilizes and modulates the activity, increasing the rate of DNA synthesis while decreasing the length of the DNA fragments, and conferring RNA synthesis capability. The DNA polymerase activity may enable DNA primase to also catalyze primer extension after primer synthesis. May also play a role in DNA repair. The polypeptide is DNA primase small subunit PriS (Methanospirillum hungatei JF-1 (strain ATCC 27890 / DSM 864 / NBRC 100397 / JF-1)).